A 148-amino-acid polypeptide reads, in one-letter code: Aspartate 1-decarboxylase (148 aa).

The active-site Schiff-base intermediate with substrate; via pyruvic acid is the Ser25. Ser25 is subject to Pyruvic acid (Ser). Thr57 contributes to the substrate binding site. Tyr58 acts as the Proton donor in catalysis. 73 to 75 (GAA) is a binding site for substrate.

The protein belongs to the PanD family. As to quaternary structure, heterooctamer of four alpha and four beta subunits. Pyruvate serves as cofactor. In terms of processing, is synthesized initially as an inactive proenzyme, which is activated by self-cleavage at a specific serine bond to produce a beta-subunit with a hydroxyl group at its C-terminus and an alpha-subunit with a pyruvoyl group at its N-terminus.

The protein localises to the cytoplasm. The catalysed reaction is L-aspartate + H(+) = beta-alanine + CO2. It participates in cofactor biosynthesis; (R)-pantothenate biosynthesis; beta-alanine from L-aspartate: step 1/1. Catalyzes the pyruvoyl-dependent decarboxylation of aspartate to produce beta-alanine. The protein is Aspartate 1-decarboxylase of Rhodococcus erythropolis (strain PR4 / NBRC 100887).